The sequence spans 208 residues: MPVHMMMSGIIIAGGRSRRFGTDKRRLRLWGEQGPCLLERAVALLQPLCSEVLVVLNDAHAWPDLPARLVADEQPGSGALGGVISGLQAMQTPTALVIAADMPVIVPALLAALAQWPFVGDALIPSSYPHPGQLQPLLAVYRHSALAPLRRVFAAGERRLQVAVTALHWVDPGPELWQMYDPTARSLLNLNTPDDLKLVQAYLGTTNI.

GTP-binding positions include isoleucine 12–glycine 14, lysine 24, aspartate 72, and aspartate 101. Aspartate 101 is a binding site for Mg(2+).

Belongs to the MobA family. Mg(2+) serves as cofactor.

The protein resides in the cytoplasm. It catalyses the reaction Mo-molybdopterin + GTP + H(+) = Mo-molybdopterin guanine dinucleotide + diphosphate. In terms of biological role, transfers a GMP moiety from GTP to Mo-molybdopterin (Mo-MPT) cofactor (Moco or molybdenum cofactor) to form Mo-molybdopterin guanine dinucleotide (Mo-MGD) cofactor. This is Probable molybdenum cofactor guanylyltransferase from Chloroflexus aggregans (strain MD-66 / DSM 9485).